We begin with the raw amino-acid sequence, 1685 residues long: Collagen alpha-5(IV) chain (1685 aa).

A signal peptide spans methionine 1 to alanine 26. The nonhelical region (NC2) stretch occupies residues alanine 27 to serine 41. Residues glycine 42–serine 1456 are triple-helical region. The segment at glutamate 49–alanine 1459 is disordered. Residues phenylalanine 52–leucine 61 are compositionally biased toward low complexity. A compositionally biased stretch (pro residues) spans proline 62 to proline 73. An N-linked (GlcNAc...) asparagine glycan is attached at asparagine 125. The span at threonine 188–proline 212 shows a compositional bias: pro residues. The span at proline 214 to proline 225 shows a compositional bias: low complexity. Residues glutamate 246–lysine 257 show a composition bias toward basic and acidic residues. Residues arginine 266–proline 281 are compositionally biased toward pro residues. Basic and acidic residues-rich tracts occupy residues glutamate 284–glutamate 305 and proline 324–lysine 333. Positions proline 413–alanine 430 are enriched in low complexity. 4 stretches are compositionally biased toward pro residues: residues proline 431 to proline 445, proline 493 to proline 505, methionine 620 to proline 630, and proline 709 to proline 727. The segment covering arginine 788 to proline 797 has biased composition (low complexity). Pro residues-rich tracts occupy residues proline 848–proline 859 and proline 868–proline 880. 5 stretches are compositionally biased toward low complexity: residues leucine 882 to methionine 901, isoleucine 912 to proline 931, tyrosine 983 to proline 999, asparagine 1010 to lysine 1026, and threonine 1111 to leucine 1120. The segment covering proline 1139–proline 1148 has biased composition (pro residues). Composition is skewed to gly residues over residues glycine 1149 to glycine 1158 and glycine 1202 to glycine 1211. Composition is skewed to pro residues over residues glutamine 1234–proline 1243 and proline 1256–leucine 1274. A compositionally biased stretch (low complexity) spans leucine 1295–glutamine 1308. The span at isoleucine 1353–proline 1362 shows a compositional bias: pro residues. The Collagen IV NC1 domain maps to glycine 1461–threonine 1685. Cystine bridges form between cysteine 1476–cysteine 1567, cysteine 1509–cysteine 1564, cysteine 1521–cysteine 1527, cysteine 1586–cysteine 1681, cysteine 1620–cysteine 1678, and cysteine 1632–cysteine 1638. Methionine 1549 participates in a covalent cross-link: S-Lysyl-methionine sulfilimine (Met-Lys) (interchain with K-1667). Residue lysine 1667 forms an S-Lysyl-methionine sulfilimine (Lys-Met) (interchain with M-1549) linkage.

This sequence belongs to the type IV collagen family. In terms of assembly, there are six type IV collagen isoforms, alpha 1(IV)-alpha 6(IV), each of which can form a triple helix structure with 2 other chains to generate type IV collagen network. Post-translationally, prolines at the third position of the tripeptide repeating unit (G-X-Y) are hydroxylated in some or all of the chains. Type IV collagens contain numerous cysteine residues which are involved in inter- and intramolecular disulfide bonding. 12 of these, located in the NC1 domain, are conserved in all known type IV collagens. In terms of processing, the trimeric structure of the NC1 domains is stabilized by covalent bonds between Lys and Met residues. Isoform 2 is found in kidney.

Its subcellular location is the secreted. It localises to the extracellular space. The protein localises to the extracellular matrix. It is found in the basement membrane. Type IV collagen is the major structural component of glomerular basement membranes (GBM), forming a 'chicken-wire' meshwork together with laminins, proteoglycans and entactin/nidogen. This Homo sapiens (Human) protein is Collagen alpha-5(IV) chain (COL4A5).